A 355-amino-acid polypeptide reads, in one-letter code: S-adenosylmethionine:tRNA ribosyltransferase-isomerase (355 aa).

Belongs to the QueA family. In terms of assembly, monomer.

Its subcellular location is the cytoplasm. It carries out the reaction 7-aminomethyl-7-carbaguanosine(34) in tRNA + S-adenosyl-L-methionine = epoxyqueuosine(34) in tRNA + adenine + L-methionine + 2 H(+). It functions in the pathway tRNA modification; tRNA-queuosine biosynthesis. Transfers and isomerizes the ribose moiety from AdoMet to the 7-aminomethyl group of 7-deazaguanine (preQ1-tRNA) to give epoxyqueuosine (oQ-tRNA). In Gluconacetobacter diazotrophicus (strain ATCC 49037 / DSM 5601 / CCUG 37298 / CIP 103539 / LMG 7603 / PAl5), this protein is S-adenosylmethionine:tRNA ribosyltransferase-isomerase.